Consider the following 567-residue polypeptide: Potassium-transporting ATPase potassium-binding subunit (567 aa).

Transmembrane regions (helical) follow at residues 5 to 25 (GWIQ…PLGF), 64 to 84 (TAYA…LYAL), 136 to 156 (GLTV…IALI), 179 to 199 (LYVL…LGIP), 254 to 274 (ISNL…TNVF), 285 to 305 (WAIL…CYWA), 330 to 350 (FGIA…CGAV), 357 to 376 (FTAL…EVIV), 421 to 441 (MLAI…AVVL), 486 to 506 (ITIG…ALAI), and 529 to 549 (LFVG…FFPA).

It belongs to the KdpA family. In terms of assembly, the system is composed of three essential subunits: KdpA, KdpB and KdpC.

It localises to the cell inner membrane. In terms of biological role, part of the high-affinity ATP-driven potassium transport (or Kdp) system, which catalyzes the hydrolysis of ATP coupled with the electrogenic transport of potassium into the cytoplasm. This subunit binds the periplasmic potassium ions and delivers the ions to the membrane domain of KdpB through an intramembrane tunnel. This chain is Potassium-transporting ATPase potassium-binding subunit, found in Mesorhizobium japonicum (strain LMG 29417 / CECT 9101 / MAFF 303099) (Mesorhizobium loti (strain MAFF 303099)).